A 495-amino-acid chain; its full sequence is OTU domain-containing protein CG3251 (495 aa).

An OTU domain is found at 29–150 (LFRKHMLGDA…MGHFETVLTM (122 aa)). In terms of domain architecture, Tudor spans 302-364 (NFKVGAKCQV…HPLPPDEFKA (63 aa)). Positions 375–389 (LHNSQMGRQSVQGDQ) are enriched in polar residues. The segment at 375-404 (LHNSQMGRQSVQGDQQGFVPDPMPGTAPSM) is disordered. Positions 395-404 (DPMPGTAPSM) are enriched in pro residues.

Putative OTU-type deubiquitinase. Catalytically inactive towards all diubiquitin molecules and long K48- and K63- linked ubiquitin chains in vitro. Potential modulator of apoptosis. The sequence is that of OTU domain-containing protein CG3251 from Drosophila melanogaster (Fruit fly).